The chain runs to 416 residues: Sarcosine oxidase subunit beta (416 aa).

FAD contacts are provided by G41, H42, E63, N71, T76, and I78. Tele-8alpha-FMN histidine is present on H182. V206, G366, and K368 together coordinate FAD.

Belongs to the SoxB family. In terms of assembly, heterotetramer composed of subunits alpha (SoxA), beta (SoxB), gamma (SoxG) and delta (SoxD). FAD is required as a cofactor. Requires FMN as cofactor.

It is found in the cytoplasm. The catalysed reaction is sarcosine + (6S)-5,6,7,8-tetrahydrofolate + O2 = (6R)-5,10-methylene-5,6,7,8-tetrahydrofolate + glycine + H2O2. It catalyses the reaction sarcosine + O2 + H2O = formaldehyde + glycine + H2O2. In the presence of tetrahydrofolate, catalyzes the oxidative demethylation of sarcosine to yield glycine, 5,10-methylenetetrahydrofolate and hydrogen peroxide. In the absence of tetrahydrofolate, catalyzes the oxidative demethylation of sarcosine to yield glycine, formaldehyde and hydrogen peroxide. This chain is Sarcosine oxidase subunit beta (soxB), found in Rhizobium meliloti (strain 1021) (Ensifer meliloti).